A 238-amino-acid polypeptide reads, in one-letter code: Ubiquinone biosynthesis O-methyltransferase (238 aa).

Residues R40, G59, D81, and M126 each contribute to the S-adenosyl-L-methionine site.

The protein belongs to the methyltransferase superfamily. UbiG/COQ3 family.

The catalysed reaction is a 3-demethylubiquinol + S-adenosyl-L-methionine = a ubiquinol + S-adenosyl-L-homocysteine + H(+). It catalyses the reaction a 3-(all-trans-polyprenyl)benzene-1,2-diol + S-adenosyl-L-methionine = a 2-methoxy-6-(all-trans-polyprenyl)phenol + S-adenosyl-L-homocysteine + H(+). It participates in cofactor biosynthesis; ubiquinone biosynthesis. O-methyltransferase that catalyzes the 2 O-methylation steps in the ubiquinone biosynthetic pathway. The protein is Ubiquinone biosynthesis O-methyltransferase of Neisseria meningitidis serogroup A / serotype 4A (strain DSM 15465 / Z2491).